We begin with the raw amino-acid sequence, 360 residues long: Peptide chain release factor 1 (360 aa).

Gln-237 carries the post-translational modification N5-methylglutamine.

It belongs to the prokaryotic/mitochondrial release factor family. Post-translationally, methylated by PrmC. Methylation increases the termination efficiency of RF1.

It localises to the cytoplasm. Its function is as follows. Peptide chain release factor 1 directs the termination of translation in response to the peptide chain termination codons UAG and UAA. This is Peptide chain release factor 1 from Pseudomonas syringae pv. syringae (strain B728a).